The sequence spans 352 residues: Uroporphyrinogen decarboxylase (352 aa).

Residues 26–30 (RQAGR), D76, Y153, S208, and H323 contribute to the substrate site.

The protein belongs to the uroporphyrinogen decarboxylase family. Homodimer.

The protein resides in the cytoplasm. The catalysed reaction is uroporphyrinogen III + 4 H(+) = coproporphyrinogen III + 4 CO2. Its pathway is porphyrin-containing compound metabolism; protoporphyrin-IX biosynthesis; coproporphyrinogen-III from 5-aminolevulinate: step 4/4. In terms of biological role, catalyzes the decarboxylation of four acetate groups of uroporphyrinogen-III to yield coproporphyrinogen-III. In Prochlorococcus marinus (strain NATL1A), this protein is Uroporphyrinogen decarboxylase.